A 675-amino-acid polypeptide reads, in one-letter code: Serine/threonine-protein kinase ATG1 (675 aa).

Residues 25-328 form the Protein kinase domain; sequence FVIGGEIGKG…FEDFFNDPVV (304 aa). ATP is bound by residues 31–39 and K54; that span reads IGKGSFAQV. D168 (proton acceptor) is an active-site residue. Over residues 339–374 the composition is skewed to basic and acidic residues; sequence DIPKVEQKPSRDLRSLEADPQREQSELAKSPRERPL. 2 disordered regions span residues 339–455 and 501–577; these read DIPK…ERKL and RLTS…TTRS. Polar residues-rich tracts occupy residues 390–399, 516–538, and 556–565; these read ANVSARTGQS, ATQQ…SAVQ, and ASRSLNTSSA.

This sequence belongs to the protein kinase superfamily. Ser/Thr protein kinase family. APG1/unc-51/ULK1 subfamily. In terms of assembly, homodimer. Forms a ternary complex with ATG13 and ATG17.

Its subcellular location is the cytoplasm. The protein resides in the preautophagosomal structure membrane. The catalysed reaction is L-seryl-[protein] + ATP = O-phospho-L-seryl-[protein] + ADP + H(+). It catalyses the reaction L-threonyl-[protein] + ATP = O-phospho-L-threonyl-[protein] + ADP + H(+). Its function is as follows. Serine/threonine protein kinase involved in the cytoplasm to vacuole transport (Cvt) and found to be essential in autophagy, where it is required for the formation of autophagosomes. Involved in the clearance of protein aggregates which cannot be efficiently cleared by the proteasome. Required for selective autophagic degradation of the nucleus (nucleophagy) as well as for mitophagy which contributes to regulate mitochondrial quantity and quality by eliminating the mitochondria to a basal level to fulfill cellular energy requirements and preventing excess ROS production. Also involved in endoplasmic reticulum-specific autophagic process, in selective removal of ER-associated degradation (ERAD) substrates. Plays a key role in ATG9 and ATG23 cycling through the pre-autophagosomal structure and is necessary to promote ATG18 binding to ATG9 through phosphorylation of ATG9. Catalyzes phosphorylation of ATG4, decreasing the interaction between ATG4 and ATG8 and impairing deconjugation of PE-conjugated forms of ATG8. The chain is Serine/threonine-protein kinase ATG1 from Colletotrichum lindemuthianum (Bean anthracnose fungus).